The following is a 1963-amino-acid chain: Myosin-4 (1963 aa).

Residues D28–P77 form the Myosin N-terminal SH3-like domain. A Myosin motor domain is found at E81 to D787. An N6,N6,N6-trimethyllysine modification is found at K125. Residue G174–T181 participates in ATP binding. 2 actin-binding regions span residues L662–E684 and R766–A780. The tract at residues M848 to E1161 is alpha-helical tailpiece (S2). Residues M848 to F1963 are a coiled coil. Basic and acidic residues-rich tracts occupy residues L970–Q988 and N1133–S1146. Disordered regions lie at residues L970–E990 and S1125–S1146. Residues Q1162 to N1173 are hinge. The tract at residues Q1162–F1963 is light meromyosin (LMM). 2 disordered regions span residues L1317–Q1336 and L1912–F1963. Positions E1322–Q1336 are enriched in basic and acidic residues.

This sequence belongs to the TRAFAC class myosin-kinesin ATPase superfamily. Myosin family. As to quaternary structure, muscle myosin is a hexameric protein that consists of 2 heavy chain subunits (MHC), 2 alkali light chain subunits (MLC) and 2 regulatory light chain subunits (MLC-2). Forms a complex composed of chaperone unc-45, unc-54 and ubiquitin-protein ligase ufd-2; promotes poly-ubiquitination of unfolded unc-54. Within the complex interacts with unc-45 (via UCS domain) and ufd-2. Interacts with itr-1 (via c-terminal coiled coil domain). In terms of processing, unfolded unc-54 is poly-ubiquitinated by ufd-2.

Its subcellular location is the cytoplasm. The protein localises to the myofibril. Functionally, required for muscle contraction. The sequence is that of Myosin-4 (unc-54) from Caenorhabditis elegans.